Reading from the N-terminus, the 301-residue chain is Oxygen-dependent coproporphyrinogen-III oxidase (301 aa).

S90 provides a ligand contact to substrate. H94 and H104 together coordinate a divalent metal cation. The active-site Proton donor is H104. Residue 106-108 (NVR) coordinates substrate. A divalent metal cation-binding residues include H143 and H173. Residues 238 to 273 (YVEFNLVWDRGTLFGLQSGGRTESILMSLPPIVKWR) form an important for dimerization region. 256–258 (GGR) lines the substrate pocket.

It belongs to the aerobic coproporphyrinogen-III oxidase family. Homodimer. A divalent metal cation is required as a cofactor.

Its subcellular location is the cytoplasm. It catalyses the reaction coproporphyrinogen III + O2 + 2 H(+) = protoporphyrinogen IX + 2 CO2 + 2 H2O. It participates in porphyrin-containing compound metabolism; protoporphyrin-IX biosynthesis; protoporphyrinogen-IX from coproporphyrinogen-III (O2 route): step 1/1. Functionally, involved in the heme biosynthesis. Catalyzes the aerobic oxidative decarboxylation of propionate groups of rings A and B of coproporphyrinogen-III to yield the vinyl groups in protoporphyrinogen-IX. This Nitrosomonas eutropha (strain DSM 101675 / C91 / Nm57) protein is Oxygen-dependent coproporphyrinogen-III oxidase.